The chain runs to 251 residues: Cell division protein ZapD (251 aa).

The protein belongs to the ZapD family. In terms of assembly, interacts with FtsZ.

Its subcellular location is the cytoplasm. Cell division factor that enhances FtsZ-ring assembly. Directly interacts with FtsZ and promotes bundling of FtsZ protofilaments, with a reduction in FtsZ GTPase activity. The chain is Cell division protein ZapD from Azoarcus sp. (strain BH72).